We begin with the raw amino-acid sequence, 335 residues long: Tetraacyldisaccharide 4'-kinase (335 aa).

Residue 51–58 participates in ATP binding; the sequence is HVGGAGKT.

The protein belongs to the LpxK family.

The catalysed reaction is a lipid A disaccharide + ATP = a lipid IVA + ADP + H(+). The protein operates within glycolipid biosynthesis; lipid IV(A) biosynthesis; lipid IV(A) from (3R)-3-hydroxytetradecanoyl-[acyl-carrier-protein] and UDP-N-acetyl-alpha-D-glucosamine: step 6/6. Transfers the gamma-phosphate of ATP to the 4'-position of a tetraacyldisaccharide 1-phosphate intermediate (termed DS-1-P) to form tetraacyldisaccharide 1,4'-bis-phosphate (lipid IVA). The chain is Tetraacyldisaccharide 4'-kinase from Bradyrhizobium sp. (strain ORS 278).